The primary structure comprises 119 residues: Large ribosomal subunit protein uL18 (119 aa).

It belongs to the universal ribosomal protein uL18 family. Part of the 50S ribosomal subunit; part of the 5S rRNA/L5/L18/L25 subcomplex. Contacts the 5S and 23S rRNAs.

This is one of the proteins that bind and probably mediate the attachment of the 5S RNA into the large ribosomal subunit, where it forms part of the central protuberance. This chain is Large ribosomal subunit protein uL18, found in Chelativorans sp. (strain BNC1).